A 464-amino-acid polypeptide reads, in one-letter code: Ubiquinone biosynthesis monooxygenase COQ6, mitochondrial (464 aa).

Residues 1–24 (MRCLGGSSLSRLLRMLSQSQGRAL) constitute a mitochondrion transit peptide.

It belongs to the UbiH/COQ6 family. In terms of assembly, component of a multi-subunit COQ enzyme complex, composed of at least coq3, coq4, coq5, coq6, coq7 and coq9. Interacts with coq8b and coq7. Requires FAD as cofactor.

It is found in the mitochondrion inner membrane. The protein resides in the golgi apparatus. The protein localises to the cell projection. The catalysed reaction is a 4-hydroxy-3-(all-trans-polyprenyl)benzoate + 2 reduced [2Fe-2S]-[ferredoxin] + O2 + 2 H(+) = a 3,4-dihydroxy-5-(all-trans-polyprenyl)benzoate + 2 oxidized [2Fe-2S]-[ferredoxin] + H2O. It carries out the reaction a 2-methoxy-6-(all-trans-polyprenyl)phenol + 2 reduced [2Fe-2S]-[ferredoxin] + O2 + 2 H(+) = a 2-methoxy-6-(all-trans-polyprenyl)benzene-1,4-diol + 2 oxidized [2Fe-2S]-[ferredoxin] + H2O. It participates in cofactor biosynthesis; ubiquinone biosynthesis. Functionally, FAD-dependent monooxygenase required for two non-consecutive steps during ubiquinone biosynthesis. Required for the C5-ring hydroxylation during ubiquinone biosynthesis by catalyzing the hydroxylation of 4-hydroxy-3-(all-trans-polyprenyl)benzoic acid to 3,4-dihydroxy-5-(all-trans-polyprenyl)benzoic acid. Also acts downstream of coq4, for the C1-hydroxylation during ubiquinone biosynthesis by catalyzing the hydroxylation of 2-methoxy-6-(all-trans-polyprenyl)phenol to 2-methoxy-6-(all-trans-polyprenyl)benzene-1,4-diol. The electrons required for the hydroxylation reaction are funneled indirectly to coq6 from NADPH via a ferredoxin/ferredoxin reductase system. This is Ubiquinone biosynthesis monooxygenase COQ6, mitochondrial from Xenopus tropicalis (Western clawed frog).